The chain runs to 767 residues: Probable beta-D-xylosidase 7 (767 aa).

Residues 1-19 (MAKQLLLLLLLFIVHGVES) form the signal peptide. Asparagine 100 is a glycosylation site (N-linked (GlcNAc...) asparagine). Aspartate 292 is a catalytic residue. The N-linked (GlcNAc...) asparagine glycan is linked to asparagine 643.

It belongs to the glycosyl hydrolase 3 family.

The protein localises to the secreted. It is found in the extracellular space. Its subcellular location is the extracellular matrix. The sequence is that of Probable beta-D-xylosidase 7 (BXL7) from Arabidopsis thaliana (Mouse-ear cress).